The sequence spans 749 residues: Triacylglycerol lipase 5 (749 aa).

Positions 54 to 59 match the HXXXXD acyltransferase motif motif; the sequence is HAISYD. Positions 183 to 388 constitute a PNPLA domain; the sequence is LVLSGGSTFG…DNDMPISRLS (206 aa). A GXSXG motif is present at residues 214-218; the sequence is GSSAG. Residue Ser-216 is the Nucleophile of the active site. 5 N-linked (GlcNAc...) asparagine glycosylation sites follow: Asn-270, Asn-289, Asn-297, Asn-304, and Asn-321. Catalysis depends on Asp-375, which acts as the Proton acceptor. Residues Asn-474 and Asn-589 are each glycosylated (N-linked (GlcNAc...) asparagine). Residues 585 to 643 form a disordered region; the sequence is IKSPNKTAAPGRFPLQPLPSPSSTFNKRKMDMLSPSPSPSTSPQRSKSSFTQQGTRQKA. The segment covering 623-633 has biased composition (low complexity); it reads PSTSPQRSKSS. Residues 634 to 643 are compositionally biased toward polar residues; it reads FTQQGTRQKA. Position 645 is a phosphoserine (Ser-645). Residues Asn-680, Asn-714, and Asn-742 are each glycosylated (N-linked (GlcNAc...) asparagine).

It localises to the lipid droplet. It catalyses the reaction a triacylglycerol + H2O = a diacylglycerol + a fatty acid + H(+). The enzyme catalyses 1-(9Z-octadecenoyl)-sn-glycero-3-phosphate + (9Z)-octadecenoyl-CoA = 1,2-di-(9Z-octadecenoyl)-sn-glycero-3-phosphate + CoA. The catalysed reaction is 1-(9Z-octadecenoyl)-sn-glycero-3-phosphate + hexadecanoyl-CoA = 1-hexadecanoyl-2-(9Z-octadecenoyl)-sn-glycero-3-phosphate + CoA. Loses its lipolytic activity in cells lacking nonpolar lipids, but retains its side activity as lysophospholipid acyltransferase. In terms of biological role, lipid particle-localized triacylglycerol (TAG) lipase. The lipid droplet/particle is a lipid storage compartment which serves as a depot of energy and building blocks for membrane lipid biosynthesis. Involved in the mobilization of the non-polar storage lipids triacylglycerols (TAGs) from lipid particles by hydrolysis of TAGs, releasing and supplying specific fatty acids to the appropriate metabolic pathways. Also catalyzes the acylation of lysophosphatidic acid (LPA). The chain is Triacylglycerol lipase 5 (TGL5) from Saccharomyces cerevisiae (strain ATCC 204508 / S288c) (Baker's yeast).